A 506-amino-acid polypeptide reads, in one-letter code: Sodium-coupled neutral amino acid symporter 2 (506 aa).

Residues 1-23 (MKKAEMGRFNISPDEDSSSYSSN) are disordered. Over 1 to 76 (MKKAEMGRFN…HPGTTSFGMS (76 aa)) the chain is Cytoplasmic. The interval 1–96 (MKKAEMGRFN…SGILGLSYAM (96 aa)) is regulates protein turnover upon amino acid deprivation. 4 positions are modified to phosphoserine: S12, S21, S22, and S55. The helical transmembrane segment at 77-96 (VFNLSNAIVGSGILGLSYAM) threads the bilayer. N82 lines the Na(+) pocket. Residues 97-102 (ANTGIA) lie on the Extracellular side of the membrane. A helical transmembrane segment spans residues 103 to 123 (LFIILLTFVSIFSLYSVHLLL). The Cytoplasmic portion of the chain corresponds to 124 to 158 (KTANEGGSLLYEQLGHKAFGMVGKLTASGSITMQN). Residues 159–177 (IGAMSSYLFIVKYELPLVI) form a helical membrane-spanning segment. The Extracellular segment spans residues 178-188 (QALMNIEDTNG). A helical membrane pass occupies residues 189 to 209 (LWYLNGDYLVLLVSLVLILPL). Over 210–217 (SLLRNLGY) the chain is Cytoplasmic. Residues 218 to 238 (LGYTSGLSLLCMMFFLIVVIF) traverse the membrane as a helical segment. At 239 to 292 (KKFQISCPAEIAFLVNETVNSSLTQPATFLPDMGFNRTESDSCQPRYFIFNSQT) the chain is on the extracellular side. The cysteines at positions 245 and 281 are disulfide-linked. Residues N258 and N274 are each glycosylated (N-linked (GlcNAc...) asparagine). The helical transmembrane segment at 293-313 (VYAVPILTFSFVCHPAILPIY) threads the bilayer. The Cytoplasmic portion of the chain corresponds to 314 to 329 (EELKGRSRRRMMNVSK). A helical membrane pass occupies residues 330-350 (ISFFAMFLMYLLAALFGYLTF). The Extracellular portion of the chain corresponds to 351–371 (YGHVESELLHTYSSVMETDIL). Residues 372 to 392 (LLIVRLAVLVAVTLTVPVVIF) form a helical membrane-spanning segment. Na(+) is bound at residue T386. At 393-413 (PIRSSITHLLCASKEFSWWRH) the chain is on the cytoplasmic side. Residues 414-434 (SVITVSILVFTNLLVIFVPNI) form a helical membrane-spanning segment. The Extracellular segment spans residues 435 to 436 (RD). A helical transmembrane segment spans residues 437 to 457 (IFGFIGASAAAMLIFILPSAF). Residues 458-472 (YIKLVKKEPMKSVQK) lie on the Cytoplasmic side of the membrane. A helical membrane pass occupies residues 473–495 (IGAMFFLLSGIVVMTGSMALIVL). Residues 496-506 (DWVHNAPGGGH) lie on the Extracellular side of the membrane.

It belongs to the amino acid/polyamine transporter 2 family. Post-translationally, polyubiquitination by NEDD4L regulates the degradation and the activity of SLC38A2.

It is found in the cell membrane. The catalysed reaction is L-alanine(in) + Na(+)(in) = L-alanine(out) + Na(+)(out). The enzyme catalyses glycine(in) + Na(+)(in) = glycine(out) + Na(+)(out). It carries out the reaction L-serine(in) + Na(+)(in) = L-serine(out) + Na(+)(out). It catalyses the reaction L-proline(in) + Na(+)(in) = L-proline(out) + Na(+)(out). The catalysed reaction is L-methionine(in) + Na(+)(in) = L-methionine(out) + Na(+)(out). The enzyme catalyses L-histidine(in) + Na(+)(in) = L-histidine(out) + Na(+)(out). It carries out the reaction L-asparagine(in) + Na(+)(in) = L-asparagine(out) + Na(+)(out). It catalyses the reaction L-glutamine(in) + Na(+)(in) = L-glutamine(out) + Na(+)(out). The catalysed reaction is L-threonine(in) + Na(+)(in) = L-threonine(out) + Na(+)(out). The enzyme catalyses L-leucine(in) + Na(+)(in) = L-leucine(out) + Na(+)(out). It carries out the reaction L-phenylalanine(in) + Na(+)(in) = L-phenylalanine(out) + Na(+)(out). Inhibited by N-methyl-D-glucamine. Inhibited by choline. Allosteric regulation of sodium ions binding by pH. Symporter that cotransports neutral amino acids and sodium ions from the extracellular to the intracellular side of the cell membrane. The transport is pH-sensitive, Li(+)-intolerant, electrogenic, driven by the Na(+) electrochemical gradient and cotransports of neutral amino acids and sodium ions with a stoichiometry of 1:1. May function in the transport of amino acids at the blood-brain barrier. May function in the transport of amino acids in the supply of maternal nutrients to the fetus through the placenta. Maintains a key metabolic glutamine/glutamate balance underpinning retrograde signaling by dendritic release of the neurotransmitter glutamate. Transports L-proline in differentiating osteoblasts for the efficient synthesis of proline-enriched proteins and provides proline essential for osteoblast differentiation and bone formation during bone development. This is Sodium-coupled neutral amino acid symporter 2 from Bos taurus (Bovine).